A 310-amino-acid chain; its full sequence is Tagatose-6-phosphate kinase (310 aa).

The protein belongs to the carbohydrate kinase PfkB family. LacC subfamily.

The enzyme catalyses D-tagatofuranose 6-phosphate + ATP = D-tagatofuranose 1,6-bisphosphate + ADP + H(+). It participates in carbohydrate metabolism; D-tagatose 6-phosphate degradation; D-glyceraldehyde 3-phosphate and glycerone phosphate from D-tagatose 6-phosphate: step 1/2. This Streptococcus agalactiae serotype Ia (strain ATCC 27591 / A909 / CDC SS700) protein is Tagatose-6-phosphate kinase.